The sequence spans 454 residues: ADP-specific phosphofructokinase (454 aa).

An ADPK domain is found at 1-452 (MIDEVRELGI…FLSYLSLLRR (452 aa)). Mg(2+) contacts are provided by glutamate 263, glutamate 293, and aspartate 436. Aspartate 436 (proton acceptor) is an active-site residue.

It belongs to the carbohydrate kinase PfkC family. As to quaternary structure, homotetramer. The cofactor is Mg(2+).

It localises to the cytoplasm. It catalyses the reaction beta-D-fructose 6-phosphate + ADP = beta-D-fructose 1,6-bisphosphate + AMP + H(+). It functions in the pathway carbohydrate degradation; glycolysis. Inhibited by AMP and ATP. Functionally, catalyzes the phosphorylation of fructose 6-phosphate to fructose 1,6-bisphosphate using ADP as the phosphate donor. As a phosphoryl group donor, ADP can be replaced by GDP, ATP, and GTP to a limited extent. The chain is ADP-specific phosphofructokinase (pfkC) from Pyrococcus furiosus (strain ATCC 43587 / DSM 3638 / JCM 8422 / Vc1).